The following is a 438-amino-acid chain: GTPase Obg (438 aa).

Positions 1 to 159 (MAFRDVLNIE…RRVRLELRLI (159 aa)) constitute an Obg domain. The region spanning 160–332 (ADVGLVGYPN…LRETLFQLLP (173 aa)) is the OBG-type G domain. ATP contacts are provided by residues 166-173 (GYPNAGKS), 191-195 (FTTLS), 219-222 (DIPG), 285-288 (NKVE), and 313-315 (SAK). Residues serine 173 and threonine 193 each contribute to the Mg(2+) site. Residues 357-435 (IVFREDAPAK…IGTFRFEYFD (79 aa)) enclose the OCT domain.

The protein belongs to the TRAFAC class OBG-HflX-like GTPase superfamily. OBG GTPase family. In terms of assembly, monomer. It depends on Mg(2+) as a cofactor.

The protein resides in the cytoplasm. An essential GTPase which binds GTP, GDP and possibly (p)ppGpp with moderate affinity, with high nucleotide exchange rates and a fairly low GTP hydrolysis rate. Plays a role in control of the cell cycle, stress response, ribosome biogenesis and in those bacteria that undergo differentiation, in morphogenesis control. The polypeptide is GTPase Obg (Deinococcus radiodurans (strain ATCC 13939 / DSM 20539 / JCM 16871 / CCUG 27074 / LMG 4051 / NBRC 15346 / NCIMB 9279 / VKM B-1422 / R1)).